Consider the following 525-residue polypeptide: Ribosomal protein S6 kinase beta-1 (525 aa).

Positions 1–54 (MRRRRRRDGFYPAPDFRDREAEDMAGVFDIDLDQPEDAGSEDELEEGGQLNESM) are disordered. A TOS motif motif is present at residues 28-32 (FDIDL). Over residues 30–46 (IDLDQPEDAGSEDELEE) the composition is skewed to acidic residues. The Protein kinase domain occupies 91 to 352 (FELLRVLGKG…AGEVQAHPFF (262 aa)). ATP contacts are provided by residues 97–105 (LGKGGYGKV) and Lys123. Asp218 functions as the Proton acceptor in the catalytic mechanism. Thr252 is modified (phosphothreonine; by PDPK1). Residues 353 to 423 (RHINWEELLA…VAPSVLESVK (71 aa)) enclose the AGC-kinase C-terminal domain. The disordered stretch occupies residues 380–399 (SQFDSKFTRQTPVDSPDDST). Polar residues predominate over residues 381–399 (QFDSKFTRQTPVDSPDDST). At Ser394 the chain carries Phosphoserine. Position 412 is a phosphothreonine; by MTOR, NEK6 and NEK7 (Thr412). The segment at 424 to 525 (EKFSFEPKIR…KRPEHLRMNL (102 aa)) is autoinhibitory domain. A phosphoserine mark is found at Ser434 and Ser441. Residue Thr444 is modified to Phosphothreonine. Phosphoserine is present on residues Ser447 and Ser452. Lys516 is modified (N6-acetyllysine).

It belongs to the protein kinase superfamily. AGC Ser/Thr protein kinase family. S6 kinase subfamily. Interacts with PPP1R9A/neurabin-1. Interacts with RPTOR. Interacts with IRS1. Interacts with EIF3B and EIF3C. Interacts with TRAF4. Interacts with POLDIP3. Interacts (via N-terminus) with IER5. In terms of assembly, (Microbial infection) Interacts with Mumps virus phosphoprotein; this interaction may play a role in the viral replication and transcription. Phosphorylation at Thr-412 is regulated by mTORC1. The phosphorylation at this site is maintained by an agonist-dependent autophosphorylation mechanism. Activated by phosphorylation at Thr-252 by PDPK1. Dephosphorylation by PPP1CC at Thr-412 in mitochondrion. In terms of tissue distribution, widely expressed.

Its subcellular location is the synapse. It localises to the synaptosome. It is found in the mitochondrion outer membrane. The protein localises to the mitochondrion. The protein resides in the nucleus. Its subcellular location is the cytoplasm. It carries out the reaction L-seryl-[protein] + ATP = O-phospho-L-seryl-[protein] + ADP + H(+). The enzyme catalyses L-threonyl-[protein] + ATP = O-phospho-L-threonyl-[protein] + ADP + H(+). Activation requires multiple phosphorylation events on serine/threonine residues. Activation appears to be first mediated by phosphorylation of multiple sites in the autoinhibitory domain, which facilitates phosphorylation at Thr-412, disrupting the autoinhibitory mechanism and allowing phosphorylation of Thr-252 by PDPK1. The active conformation of the kinase is believed to be stabilized by a mechanism involving three conserved phosphorylation sites located in the kinase domain activation loop (Thr-252) and in the AGC-kinase C-terminal domain (Ser-394 in the middle of the tail/linker region and Thr-412 within a hydrophobic motif at its end). Activated by mTORC1; isoform Alpha I and isoform Alpha II are sensitive to rapamycin, which inhibits activating phosphorylation at Thr-412. Activated by PDPK1. Functionally, serine/threonine-protein kinase that acts downstream of mTOR signaling in response to growth factors and nutrients to promote cell proliferation, cell growth and cell cycle progression. Regulates protein synthesis through phosphorylation of EIF4B, RPS6 and EEF2K, and contributes to cell survival by repressing the pro-apoptotic function of BAD. Under conditions of nutrient depletion, the inactive form associates with the EIF3 translation initiation complex. Upon mitogenic stimulation, phosphorylation by the mechanistic target of rapamycin complex 1 (mTORC1) leads to dissociation from the EIF3 complex and activation. The active form then phosphorylates and activates several substrates in the pre-initiation complex, including the EIF2B complex and the cap-binding complex component EIF4B. Also controls translation initiation by phosphorylating a negative regulator of EIF4A, PDCD4, targeting it for ubiquitination and subsequent proteolysis. Promotes initiation of the pioneer round of protein synthesis by phosphorylating POLDIP3/SKAR. In response to IGF1, activates translation elongation by phosphorylating EEF2 kinase (EEF2K), which leads to its inhibition and thus activation of EEF2. Also plays a role in feedback regulation of mTORC2 by mTORC1 by phosphorylating MAPKAP1/SIN1, MTOR and RICTOR, resulting in the inhibition of mTORC2 and AKT1 signaling. Also involved in feedback regulation of mTORC1 and mTORC2 by phosphorylating DEPTOR. Mediates cell survival by phosphorylating the pro-apoptotic protein BAD and suppressing its pro-apoptotic function. Phosphorylates mitochondrial URI1 leading to dissociation of a URI1-PPP1CC complex. The free mitochondrial PPP1CC can then dephosphorylate RPS6KB1 at Thr-412, which is proposed to be a negative feedback mechanism for the RPS6KB1 anti-apoptotic function. Mediates TNF-alpha-induced insulin resistance by phosphorylating IRS1 at multiple serine residues, resulting in accelerated degradation of IRS1. In cells lacking functional TSC1-2 complex, constitutively phosphorylates and inhibits GSK3B. May be involved in cytoskeletal rearrangement through binding to neurabin. Phosphorylates and activates the pyrimidine biosynthesis enzyme CAD, downstream of MTOR. Following activation by mTORC1, phosphorylates EPRS and thereby plays a key role in fatty acid uptake by adipocytes and also most probably in interferon-gamma-induced translation inhibition. This chain is Ribosomal protein S6 kinase beta-1 (RPS6KB1), found in Homo sapiens (Human).